Consider the following 310-residue polypeptide: Apolipoprotein E (310 aa).

The N-terminal stretch at Met1–Ala18 is a signal peptide. 8 tandem repeats follow at residues Ala77 to Gly98, Pro99 to Gly120, Ala121 to Gly142, Gln143 to Leu164, Arg165 to Glu186, Arg187 to Thr208, Leu209 to Arg226, and Gly227 to Gln248. Residues Ala77–Gln248 form an 8 X 22 AA approximate tandem repeats region. Positions His155–Arg165 are LDL and other lipoprotein receptors binding. Residue Met159–Arg162 participates in heparin binding. The interval His207–Met283 is lipid-binding and lipoprotein association. Ala222–Leu229 is a binding site for heparin. Residues Asn259–Gln310 are homooligomerization. The specificity for association with VLDL stretch occupies residues Arg271–Met283.

This sequence belongs to the apolipoprotein A1/A4/E family. Homotetramer. May interact with ABCA1; functionally associated with ABCA1 in the biogenesis of HDLs. May interact with APP/A4 amyloid-beta peptide; the interaction is extremely stable in vitro but its physiological significance is unclear. May interact with MAPT. May interact with MAP2. In the cerebrospinal fluid, interacts with secreted SORL1. Interacts with PMEL; this allows the loading of PMEL luminal fragment on ILVs to induce fibril nucleation. In terms of processing, APOE exists as multiple glycosylated and sialylated glycoforms within cells and in plasma. The extent of glycosylation and sialylation are tissue and context specific. Post-translationally, glycated in plasma VLDL. Phosphorylated by FAM20C in the extracellular medium.

The protein resides in the secreted. It localises to the extracellular space. It is found in the extracellular matrix. Its subcellular location is the extracellular vesicle. The protein localises to the endosome. The protein resides in the multivesicular body. Its function is as follows. APOE is an apolipoprotein, a protein associating with lipid particles, that mainly functions in lipoprotein-mediated lipid transport between organs via the plasma and interstitial fluids. APOE is a core component of plasma lipoproteins and is involved in their production, conversion and clearance. Apolipoproteins are amphipathic molecules that interact both with lipids of the lipoprotein particle core and the aqueous environment of the plasma. As such, APOE associates with chylomicrons, chylomicron remnants, very low density lipoproteins (VLDL) and intermediate density lipoproteins (IDL) but shows a preferential binding to high-density lipoproteins (HDL). It also binds a wide range of cellular receptors including the LDL receptor/LDLR and the very low-density lipoprotein receptor/VLDLR that mediate the cellular uptake of the APOE-containing lipoprotein particles. Finally, APOE also has a heparin-binding activity and binds heparan-sulfate proteoglycans on the surface of cells, a property that supports the capture and the receptor-mediated uptake of APOE-containing lipoproteins by cells. The protein is Apolipoprotein E (APOE) of Ceratotherium simum cottoni (Northern white rhinoceros).